Reading from the N-terminus, the 589-residue chain is Guanylate-binding protein 2 (589 aa).

Positions 1–309 (MASEIHMSEP…GAISNGSLPC (309 aa)) are GTPase domain (Globular). The region spanning 35-276 (TQPVVVVAIV…FTSYILSYSS (242 aa)) is the GB1/RHD3-type G domain. Residues 45 to 52 (GLYRTGKS), 181 to 182 (RD), and Leu245 contribute to the GTP site. Cys586 carries the cysteine methyl ester modification. A lipid anchor (S-geranylgeranyl cysteine) is attached at Cys586. Residues 587 to 589 (TIL) constitute a propeptide, removed in mature form.

This sequence belongs to the TRAFAC class dynamin-like GTPase superfamily. GB1/RHD3 GTPase family. GB1 subfamily. Homodimer; homodimerization occurs upon GTP-binding and is required for the association with membranous structures. Heterodimer with other family members, including GBP1, GBP3, GBP4 and GBP5. Post-translationally, isoprenylation is required for proper subcellular location.

The protein resides in the cytoplasmic vesicle membrane. Its subcellular location is the golgi apparatus membrane. It is found in the cytoplasm. It localises to the perinuclear region. The catalysed reaction is GTP + H2O = GDP + phosphate + H(+). Interferon (IFN)-inducible GTPase that plays important roles in innate immunity against a diverse range of bacterial, viral and protozoan pathogens. Hydrolyzes GTP to GMP in 2 consecutive cleavage reactions, but the major reaction product is GDP. Following infection, recruited to the pathogen-containing vacuoles or vacuole-escaped bacteria and acts as a positive regulator of inflammasome assembly by promoting the release of inflammasome ligands from bacteria. Acts by promoting lysis of pathogen-containing vacuoles, releasing pathogens into the cytosol. Following pathogen release in the cytosol, promotes recruitment of proteins that mediate bacterial cytolysis, such as Gm12250/Irgb10: this liberates ligands that are detected by inflammasomes, such as lipopolysaccharide (LPS) that activates the non-canonical CASP4/CASP11 inflammasome or double-stranded DNA (dsDNA) that activates the AIM2 inflammasome. Confers protection to the protozoan pathogen Toxoplasma gondii. Independently of its GTPase activity, acts as an inhibitor of various viruses infectivity by inhibiting FURIN-mediated maturation of viral envelope proteins. This Mus musculus (Mouse) protein is Guanylate-binding protein 2.